Consider the following 303-residue polypeptide: tRNA pseudouridine synthase B (303 aa).

D53 acts as the Nucleophile in catalysis.

The protein belongs to the pseudouridine synthase TruB family. Type 1 subfamily.

The catalysed reaction is uridine(55) in tRNA = pseudouridine(55) in tRNA. In terms of biological role, responsible for synthesis of pseudouridine from uracil-55 in the psi GC loop of transfer RNAs. This Zymomonas mobilis subsp. mobilis (strain ATCC 31821 / ZM4 / CP4) protein is tRNA pseudouridine synthase B.